We begin with the raw amino-acid sequence, 439 residues long: Agmatine coumaroyltransferase-1 (439 aa).

Active-site proton acceptor residues include His-152 and Asp-385.

The protein belongs to the plant acyltransferase family. As to quaternary structure, monomer.

It carries out the reaction 4-coumaroyl-CoA + agmatine = N-(4-guanidinobutyl)-4-hydroxycinnamamide + CoA + H(+). Its activity is regulated as follows. Inhibited by DEPC. Completely inhibited by ZnSO(4), strongly inhibited by CuSO(4), partially inhibited by MnCl(2). Unaffected by MgCl(2) or CaCl(2). Functionally, involved in the synthesis of hordatines (antifungal hydroxycinnamoylagmatine derivatives). Specific for agmatine as the acyl acceptor, inactive towards tyramine and putrescine. Has activity with the acyl donors 4-coumaroyl-CoA, cinnamoyl-CoA, caffeoyl-CoA, feruloyl-CoA, and to a lesser extent sinapoyl-CoA. The polypeptide is Agmatine coumaroyltransferase-1 (ACT-1) (Hordeum vulgare (Barley)).